The chain runs to 466 residues: Putative transcription factor bHLH041 (466 aa).

3 disordered regions span residues 108-129 (PANS…SLSP), 194-213 (LTGP…KGRA), and 260-289 (RENA…TQLQ). A compositionally biased stretch (low complexity) spans 120–129 (PSSSSSSLSP). Positions 268 to 279 (EGSGGSGGGGRY) are enriched in gly residues. In terms of domain architecture, bHLH spans 285 to 334 (ATQLQHMISERKRREKLNESFQALRSLLPPGTKKDKASVLSIAREQLSSL).

As to quaternary structure, homodimer.

Its subcellular location is the nucleus. In Arabidopsis thaliana (Mouse-ear cress), this protein is Putative transcription factor bHLH041 (BHLH41).